We begin with the raw amino-acid sequence, 429 residues long: Methanol:N,N-dimethyl-4-nitrosoaniline oxidoreductase (429 aa).

It belongs to the iron-containing alcohol dehydrogenase family. In terms of assembly, homodecamer. The cofactor is Mg(2+). Zn(2+) serves as cofactor. It depends on NADPH as a cofactor.

It catalyses the reaction methanol + A = formaldehyde + AH2. With respect to regulation, inhibited by azide and hydrazine. Catalyzes the oxidation of methanol to yield formaldehyde. While the in vivo electron acceptor is not known, N,N-dimethyl-4-nitrosoaniline (NDMA) can serve this function in vitro and is reduced to 4-(hydroxylamino)-N,N-dimethylaniline. It can also use various other primary alcohols, polyols and formaldehyde. In addition, MNO is able to produce methylformate from methanol plus formaldehyde, and possesses a formaldehyde dismutase and a NADH-dependent formaldehyde reductase activity. This is Methanol:N,N-dimethyl-4-nitrosoaniline oxidoreductase (mno) from Amycolatopsis methanolica.